We begin with the raw amino-acid sequence, 570 residues long: L-ascorbate oxidase (570 aa).

Residues M1–A18 form the signal peptide. Plastocyanin-like domains are found at residues W33–V140 and F154–V317. Intrachain disulfides connect C36/C219, C98/C557, and C197/C211. H77 and H79 together coordinate Cu cation. N-linked (GlcNAc...) asparagine glycosylation is present at N109. The Cu cation site is built by H121 and H123. N196 carries an N-linked (GlcNAc...) asparagine glycan. 7 N-linked (GlcNAc...) asparagine glycosylation sites follow: N229, N343, N384, N407, N434, N442, and N458. One can recognise a Plastocyanin-like 3 domain in the interval R426 to G543. H463, H466, H468, H525, C526, H527, H531, and M536 together coordinate Cu cation.

Belongs to the multicopper oxidase family. As to quaternary structure, dimer. Cu cation serves as cofactor.

It localises to the secreted. It carries out the reaction 4 L-ascorbate + O2 = 4 monodehydro-L-ascorbate radical + 2 H2O. It functions in the pathway cofactor degradation; L-ascorbate degradation. Its function is as follows. Ascorbate oxidase involved in a redox system involving ascorbic acid (AsA). The oxidation of AsA represses responses to high salinity and oxidative stress conditions such as vegetative growth and seed production reductions. Negative regulator of defense responses toward incompatible Turnip mosaic virus (TuMV strain UK1) by preventing jasmonic acid (JA)- dependent accumulation of ascorbic acid (AsA, AS) and dehydroascobic acid (DHA). The chain is L-ascorbate oxidase from Brassica rapa subsp. pekinensis (Chinese cabbage).